A 430-amino-acid chain; its full sequence is Glutamate-1-semialdehyde 2,1-aminomutase (430 aa).

Lys267 is subject to N6-(pyridoxal phosphate)lysine.

Belongs to the class-III pyridoxal-phosphate-dependent aminotransferase family. HemL subfamily. In terms of assembly, homodimer. The cofactor is pyridoxal 5'-phosphate.

Its subcellular location is the cytoplasm. The enzyme catalyses (S)-4-amino-5-oxopentanoate = 5-aminolevulinate. The protein operates within porphyrin-containing compound metabolism; protoporphyrin-IX biosynthesis; 5-aminolevulinate from L-glutamyl-tRNA(Glu): step 2/2. This is Glutamate-1-semialdehyde 2,1-aminomutase from Sulfurovum sp. (strain NBC37-1).